A 1242-amino-acid chain; its full sequence is ATP-dependent helicase/nuclease subunit A (1242 aa).

In terms of domain architecture, UvrD-like helicase ATP-binding spans 13 to 486 (SQWTDDQWKA…IDLAKNFRSR (474 aa)). 34 to 41 (AAAGSGKT) is an ATP binding site. Positions 506-806 (GEIEYDADAE…RIMTIHKSKG (301 aa)) constitute a UvrD-like helicase C-terminal domain.

This sequence belongs to the helicase family. AddA subfamily. As to quaternary structure, heterodimer of AddA and AddB/RexB. The cofactor is Mg(2+).

The catalysed reaction is Couples ATP hydrolysis with the unwinding of duplex DNA by translocating in the 3'-5' direction.. It catalyses the reaction ATP + H2O = ADP + phosphate + H(+). In terms of biological role, the heterodimer acts as both an ATP-dependent DNA helicase and an ATP-dependent, dual-direction single-stranded exonuclease. Recognizes the chi site generating a DNA molecule suitable for the initiation of homologous recombination. The AddA nuclease domain is required for chi fragment generation; this subunit has the helicase and 3' -&gt; 5' nuclease activities. The sequence is that of ATP-dependent helicase/nuclease subunit A from Bacillus cytotoxicus (strain DSM 22905 / CIP 110041 / 391-98 / NVH 391-98).